The chain runs to 107 residues: Bombesin (107 aa).

A signal peptide spans 1 to 26 (MSAIPLNRILPLGFLLIFSFISLSSC). A propeptide spanning residues 27-41 (MEFVEDPNNQGGLNL) is cleaved from the precursor. Gln42 bears the Pyrrolidone carboxylic acid mark. Met55 is modified (methionine amide). The propeptide occupies 56 to 107 (GKKSLQDTDFEEMESFAKRNVENMKAESERELRHAQLVVRNILEQYLKNMQN).

In terms of tissue distribution, expressed by the skin glands.

The protein resides in the secreted. Functionally, stimulates smooth muscle contraction. Role in induction of hypothermia, stimulation of DNA replication and release of many gastrointestinal hormones. Possesses insulin-releasing activity. In Bombina variegata (Yellow-bellied toad), this protein is Bombesin.